The following is a 568-amino-acid chain: Sulfite reductase [NADPH] hemoprotein beta-component (568 aa).

Positions 425, 431, 470, and 474 each coordinate [4Fe-4S] cluster. C474 is a siroheme binding site.

The protein belongs to the nitrite and sulfite reductase 4Fe-4S domain family. In terms of assembly, alpha(8)-beta(8). The alpha component is a flavoprotein, the beta component is a hemoprotein. Siroheme serves as cofactor. It depends on [4Fe-4S] cluster as a cofactor.

It carries out the reaction hydrogen sulfide + 3 NADP(+) + 3 H2O = sulfite + 3 NADPH + 4 H(+). Its pathway is sulfur metabolism; hydrogen sulfide biosynthesis; hydrogen sulfide from sulfite (NADPH route): step 1/1. In terms of biological role, component of the sulfite reductase complex that catalyzes the 6-electron reduction of sulfite to sulfide. This is one of several activities required for the biosynthesis of L-cysteine from sulfate. The protein is Sulfite reductase [NADPH] hemoprotein beta-component of Xanthomonas campestris pv. campestris (strain ATCC 33913 / DSM 3586 / NCPPB 528 / LMG 568 / P 25).